The primary structure comprises 161 residues: Nucleotide-binding protein Sama_2557 (161 aa).

This sequence belongs to the YajQ family.

Nucleotide-binding protein. This Shewanella amazonensis (strain ATCC BAA-1098 / SB2B) protein is Nucleotide-binding protein Sama_2557.